The chain runs to 688 residues: Acyl-CoA synthetase short-chain family member B, mitochondrial (688 aa).

The protein belongs to the ATP-dependent AMP-binding enzyme family.

Its subcellular location is the mitochondrion. The enzyme catalyses acetate + ATP + CoA = acetyl-CoA + AMP + diphosphate. Activates acetate so that it can be used for lipid synthesis or for energy generation. The protein is Acyl-CoA synthetase short-chain family member B, mitochondrial (aslB) of Dictyostelium discoideum (Social amoeba).